We begin with the raw amino-acid sequence, 872 residues long: Oxidation resistance protein 1 (872 aa).

Residues 1-86 form a disordered region; sequence MSVTNLSWLK…QKKTLDKKDG (86 aa). Over residues 63–86 the composition is skewed to basic and acidic residues; sequence RRSELKRFYTIDTGQKKTLDKKDG. Position 90 is a phosphoserine (serine 90). The 44-residue stretch at 98–141 folds into the LysM domain; sequence VKYTVESRDSLNSIALKFDTTPNELVQLNKLFSRAVVTGQVLYV. Threonine 118 is modified (phosphothreonine). Positions 150–168 are enriched in low complexity; sequence VESSPSLSPISPLSPTSSE. Residues 150–187 are disordered; that stretch reads VESSPSLSPISPLSPTSSEAELEKTTTPDVVHPKEPTP. Over residues 170–184 the composition is skewed to basic and acidic residues; the sequence is ELEKTTTPDVVHPKE. Phosphoserine is present on residues serine 201, serine 202, and serine 204. One can recognise a GRAM domain in the interval 212-268; the sequence is EKFLKINCRYITSSKGTVSGVLLVTPNNIMFDPHKTDPLVQENGCEEYGIMCPMEEV. 3 positions are modified to phosphoserine: serine 294, serine 334, and serine 336. The segment at 314 to 338 is disordered; that stretch reads SRIRDAANDSASTAPRSTEESLSED. Threonine 341 is modified (phosphothreonine). Serine 346 and serine 496 each carry phosphoserine. Residues 549–576 are mediates oxidative antimutator activity; the sequence is RRHRLHKFLCLRVRKPMRKTFVSQASAT. Positions 711 to 872 constitute a TLDc domain; the sequence is HLLLPDQIIK…IQDIEIWAFK (162 aa).

The protein belongs to the OXR1 family.

The protein resides in the mitochondrion. Functionally, may be involved in protection from oxidative damage. The chain is Oxidation resistance protein 1 (OXR1) from Bos taurus (Bovine).